Reading from the N-terminus, the 661-residue chain is MLYPQDFDVIVVGGGHAGTEAALAAARMGSRTLLLTHNIETLGQMSCNPSIGGIGKGHLVKEVDALGGAMALATDEAGIQFRILNSSKGPAVRATRAQADRILYKAAIRRMLENQPNLWLFQQAVDDLMVEGDRVVGAVTQVGIRFRSRAVVLTAGTFLDGKIHVGLNNYAAGRAGDPPAVSLSARLKELQLPQGRLKTGTPPRIDGRSIDFSQCEEQPGDGMPGGVNEGQVPVFSFMAHAYGGAAMHPRQVPCWITHTNARTHEIIRSGFDRSPMFTGKIEGVGPRYCPSVEDKINRFADKESHQIFLEPEGLTTHEFYPNGISTSLPFDIQYDLVRSMHGLENAHILRPGYAIEYDYFDPRSLKSSFETRQIQGLFFAGQINGTTGYEEAAAQGLFAGINAALQCRGVGAWVPARDEAYLGVLVDDLITKGVTEPYRMFTSRAEFRLQLREDNADMRLTEAGRRMGLVDDARWDAFSRKRDAVSRETERLKSTWVNPRNLPTVEAERVLGKAIEHEYNLFDLLRRPDVGYDALTTMDGGKYASEAVSRETLGELSASVIEQVEIAAKYAGYIDRQRDEVQRAAHFEKLRLPEDLDYMQVAALSIEVRQKLQKHRPETLGQASRISGVTPAAISLLMVHLKKGGFKGFAPQPADGVETVA.

13 to 18 contributes to the FAD binding site; sequence GGGHAG. Position 285–299 (285–299) interacts with NAD(+); sequence GPRYCPSVEDKINRF.

It belongs to the MnmG family. Homodimer. Heterotetramer of two MnmE and two MnmG subunits. It depends on FAD as a cofactor.

It is found in the cytoplasm. In terms of biological role, NAD-binding protein involved in the addition of a carboxymethylaminomethyl (cmnm) group at the wobble position (U34) of certain tRNAs, forming tRNA-cmnm(5)s(2)U34. The chain is tRNA uridine 5-carboxymethylaminomethyl modification enzyme MnmG from Acidovorax sp. (strain JS42).